We begin with the raw amino-acid sequence, 424 residues long: Gamma-glutamyl phosphate reductase (424 aa).

The disordered stretch occupies residues 1 to 27; it reads MSVEAQSRSGAVDTQEPADLREQVHSA.

This sequence belongs to the gamma-glutamyl phosphate reductase family.

It is found in the cytoplasm. It carries out the reaction L-glutamate 5-semialdehyde + phosphate + NADP(+) = L-glutamyl 5-phosphate + NADPH + H(+). It participates in amino-acid biosynthesis; L-proline biosynthesis; L-glutamate 5-semialdehyde from L-glutamate: step 2/2. Its function is as follows. Catalyzes the NADPH-dependent reduction of L-glutamate 5-phosphate into L-glutamate 5-semialdehyde and phosphate. The product spontaneously undergoes cyclization to form 1-pyrroline-5-carboxylate. This chain is Gamma-glutamyl phosphate reductase, found in Mycolicibacterium smegmatis (strain ATCC 700084 / mc(2)155) (Mycobacterium smegmatis).